The following is a 780-amino-acid chain: ATP-dependent DNA helicase RecG (780 aa).

Domain stretches follow at residues 1–350, 351–549, and 550–780; these read MLCS…GGIP, KKIE…EMPP, and GRKE…IEVG. The interval 154-252 is wedge domain; the sequence is RKIFKLNDLL…VTPKEGEYVR (99 aa). ATP-binding residues include Phe-367, Leu-369, Gly-399, Ser-400, Gly-401, Lys-402, Thr-403, and Arg-436. The Helicase ATP-binding domain maps to 383–544; that stretch reads DMISEKPMNR…FYGDLDVTVI (162 aa). A DEAH box motif is present at residues 497-500; it reads DEQH. A Helicase C-terminal domain is found at 563-728; it reads RVNEVYEFVR…EYDLKTRGPG (166 aa).

It belongs to the helicase family. RecG subfamily. As to quaternary structure, monomer.

The enzyme catalyses Couples ATP hydrolysis with the unwinding of duplex DNA by translocating in the 3'-5' direction.. The catalysed reaction is ATP + H2O = ADP + phosphate + H(+). Plays a critical role in recombination and DNA repair. Helps process Holliday junction intermediates to mature products by catalyzing branch migration. Has replication fork (Y-DNA) regression activity, unwinds stalled or blocked replication forks to make a HJ that can be resolved. Has a DNA unwinding activity characteristic of a DNA helicase with 3'-5' polarity. Might be a DNA translocase rather than a bona fide helicase. The chain is ATP-dependent DNA helicase RecG from Thermotoga maritima (strain ATCC 43589 / DSM 3109 / JCM 10099 / NBRC 100826 / MSB8).